We begin with the raw amino-acid sequence, 237 residues long: Sugar fermentation stimulation protein homolog (237 aa).

Belongs to the SfsA family.

This is Sugar fermentation stimulation protein homolog from Pseudomonas fluorescens (strain Pf0-1).